A 1300-amino-acid polypeptide reads, in one-letter code: Zinc finger protein 536 (1300 aa).

Disordered stretches follow at residues 1-26 (MEEASLCLGVSSAEPEAEPHLSGPVL) and 47-77 (FPELHPRPNPEEKPPASLEEKAHVPMSGQPM). Over residues 48–69 (PELHPRPNPEEKPPASLEEKAH) the composition is skewed to basic and acidic residues. 6 consecutive C2H2-type zinc fingers follow at residues 130–152 (YPCPLCGKRFRFNSILSLHMRTH), 158–180 (FKCPYCDHRAAQKGNLKIHLRTH), 274–297 (FRCTFCKGKFKKREELDRHIRILH), 300–323 (YKCTLCDFAASQEEELISHVEKAH), 345–367 (FRCEVCGQVFSQAWFLKGHMRKH), and 373–395 (HCCQICGRRFKEPWFLKNHMKVH). Disordered regions lie at residues 584 to 604 (HSTKVGSQRDLPSKLDPLESS) and 650 to 739 (SRVH…QQPA). The segment covering 594–604 (LPSKLDPLESS) has biased composition (basic and acidic residues). The C2H2-type 7 zinc finger occupies 631-653 (TECPDCGRVFRTYHQVVVHSRVH). A compositionally biased stretch (basic and acidic residues) spans 657-674 (RKGEEDGLHVGLDERRGS). Residues 675 to 696 (GSDQESQSVSRSTTPGSSNVTE) are compositionally biased toward polar residues. 2 consecutive C2H2-type zinc fingers follow at residues 751 to 773 (KDCPYCGKTFRTSHHLKVHLRIH) and 779 to 801 (YKCPHCDYAGTQSASLKYHLERH). The disordered stretch occupies residues 802-826 (HRERQNGAGPLSGQPPNQDHKDEMS). A phosphoserine mark is found at Ser826 and Ser827. Residues 856–880 (SQQWTSGVLSSGDHSGQATGMSSEV) show a composition bias toward polar residues. Disordered stretches follow at residues 856–893 (SQQWTSGVLSSGDHSGQATGMSSEVPSDALKGTDLPSK), 937–985 (KDKA…PDAA), and 1124–1260 (SGAS…SLDK). 2 stretches are compositionally biased toward basic and acidic residues: residues 950-972 (HGVDGGEEKPSGKSSQRKSEKSQ) and 1133-1143 (KEPDGKAHSEE). Acidic residues-rich tracts occupy residues 1160-1170 (DLSDIASSEDM) and 1178-1187 (NDEEDVETEP). Residues 1194-1209 (LSALSKDSSSDGGDSL) show a composition bias toward low complexity.

This sequence belongs to the krueppel C2H2-type zinc-finger protein family.

Its subcellular location is the nucleus. Its function is as follows. Transcriptional repressor that negatively regulates neuron differentiation by repressing retinoic acid-induced gene transcription. Binds and interrupts RARA from binding to retinoic acid response elements (RARE) composed of tandem 5'-AGGTCA-3' sites known as DR1-DR5. Recognizes and binds 2 copies of the core DNA sequence 5'-CCCCCA-3'. In Homo sapiens (Human), this protein is Zinc finger protein 536 (ZNF536).